The following is a 393-amino-acid chain: Probable protein phosphatase 2C 72 (393 aa).

Residues 49-357 (EFSMAVVQAN…DDITVVVVFF (309 aa)) enclose the PPM-type phosphatase domain. Mn(2+) contacts are provided by Asp-88 and Gly-89. Residues 147–167 (LAAVGSCCLVGVICAGNLYIA) traverse the membrane as a helical segment. Residues Asp-289 and Asp-348 each contribute to the Mn(2+) site.

This sequence belongs to the PP2C family. Mg(2+) serves as cofactor. It depends on Mn(2+) as a cofactor.

It localises to the membrane. It carries out the reaction O-phospho-L-seryl-[protein] + H2O = L-seryl-[protein] + phosphate. The enzyme catalyses O-phospho-L-threonyl-[protein] + H2O = L-threonyl-[protein] + phosphate. The polypeptide is Probable protein phosphatase 2C 72 (Oryza sativa subsp. japonica (Rice)).